We begin with the raw amino-acid sequence, 426 residues long: tRNA modification GTPase MnmE (426 aa).

(6S)-5-formyl-5,6,7,8-tetrahydrofolate is bound by residues Arg20, Glu77, and Met117. In terms of domain architecture, TrmE-type G spans 213–350 (GFEVAILGAP…LLTDIEGVLS (138 aa)). Residue Asn223 participates in K(+) binding. GTP contacts are provided by residues 223–228 (NAGKST), 242–248 (SDVPGTT), and 267–270 (DTAG). Residue Ser227 coordinates Mg(2+). Ser242, Val244, and Thr247 together coordinate K(+). A Mg(2+)-binding site is contributed by Thr248. Lys426 provides a ligand contact to (6S)-5-formyl-5,6,7,8-tetrahydrofolate.

The protein belongs to the TRAFAC class TrmE-Era-EngA-EngB-Septin-like GTPase superfamily. TrmE GTPase family. Homodimer. Heterotetramer of two MnmE and two MnmG subunits. The cofactor is K(+).

The protein resides in the cytoplasm. Functionally, exhibits a very high intrinsic GTPase hydrolysis rate. Involved in the addition of a carboxymethylaminomethyl (cmnm) group at the wobble position (U34) of certain tRNAs, forming tRNA-cmnm(5)s(2)U34. This is tRNA modification GTPase MnmE from Jannaschia sp. (strain CCS1).